Here is a 728-residue protein sequence, read N- to C-terminus: Phosphoribosylformylglycinamidine synthase subunit PurL (728 aa).

H42 is a catalytic residue. Residues Y45 and K84 each coordinate ATP. E86 contributes to the Mg(2+) binding site. Substrate contacts are provided by residues 87 to 90 (SHNH) and R109. Catalysis depends on H88, which acts as the Proton acceptor. D110 is a Mg(2+) binding site. Position 237 (Q237) interacts with substrate. D265 serves as a coordination point for Mg(2+). A substrate-binding site is contributed by 309-311 (ESQ). Residues D491 and G528 each coordinate ATP. N529 lines the Mg(2+) pocket. S531 contributes to the substrate binding site.

Belongs to the FGAMS family. Monomer. Part of the FGAM synthase complex composed of 1 PurL, 1 PurQ and 2 PurS subunits.

It localises to the cytoplasm. The catalysed reaction is N(2)-formyl-N(1)-(5-phospho-beta-D-ribosyl)glycinamide + L-glutamine + ATP + H2O = 2-formamido-N(1)-(5-O-phospho-beta-D-ribosyl)acetamidine + L-glutamate + ADP + phosphate + H(+). The protein operates within purine metabolism; IMP biosynthesis via de novo pathway; 5-amino-1-(5-phospho-D-ribosyl)imidazole from N(2)-formyl-N(1)-(5-phospho-D-ribosyl)glycinamide: step 1/2. In terms of biological role, part of the phosphoribosylformylglycinamidine synthase complex involved in the purines biosynthetic pathway. Catalyzes the ATP-dependent conversion of formylglycinamide ribonucleotide (FGAR) and glutamine to yield formylglycinamidine ribonucleotide (FGAM) and glutamate. The FGAM synthase complex is composed of three subunits. PurQ produces an ammonia molecule by converting glutamine to glutamate. PurL transfers the ammonia molecule to FGAR to form FGAM in an ATP-dependent manner. PurS interacts with PurQ and PurL and is thought to assist in the transfer of the ammonia molecule from PurQ to PurL. This Campylobacter jejuni subsp. jejuni serotype O:2 (strain ATCC 700819 / NCTC 11168) protein is Phosphoribosylformylglycinamidine synthase subunit PurL.